We begin with the raw amino-acid sequence, 670 residues long: MHAIQTEMDQLTHTINQHNIRYYVDDAPSIPDAEYDRLIKRLTELEGDYPQFKSVDSPTQRVGGIALQKFAQITHLKPMLSLDNAFEQADFAAFNKRITDKVDNVDYVCEPKLDGLAVSITYRFGVLERAATRGDGSVGEDITANVRTIRSIPLKLRGEGFPDLVEVRGEVFMPKAAFEVLNQRQISKGDKVFVNPRNAAAGSLRQLDSKITASRALGFYAYALGVVEGESQPMQTSHYGQLTQLQQWGVPVSSEVKVTDSLEKVYAYYADIMARRSALEYEIDGVVIKVNDIAKQQTLGFVAKAPRWAIAYKFPAQEEMTLLESVDFQVGRTGAVTPVARLKPIFVGGVTVSNATLHNADEIARLGVKIGDTVIIRRAGDVIPQIVAIVPEKRPDDAQDIIFPQHCPVCQSIVERLEGEAVARCSGGLFCEAQRKEAIKHFASRKALNIDGMGDKIVEQLIDKELVKTPADLFSLTASSVTMLDRMAMKSATNIVAAIKQAKTTTLARFLYSLGIREVGEATAANLAQHFTEFERIRTASVEQLLEVADVGDIVAKHIRQFFSQPHNIEVIDQLLEAGITWPVIEQADESQLSLKGQTWVLTGTLTQLNRNDAKAQLQALGAKVAGSVSKNTDCLVAGEAAGSKLAKAEELGVKVIDEQALMDLLNAAN.

Residues 32 to 36 (DAEYD), 81 to 82 (SL), and Glu110 each bind NAD(+). The active-site N6-AMP-lysine intermediate is the Lys112. NAD(+)-binding residues include Arg133, Glu170, Lys289, and Lys313. Residues Cys407, Cys410, Cys425, and Cys431 each coordinate Zn(2+). The BRCT domain maps to 590–670 (ESQLSLKGQT…ALMDLLNAAN (81 aa)).

Belongs to the NAD-dependent DNA ligase family. LigA subfamily. The cofactor is Mg(2+). Mn(2+) is required as a cofactor.

The catalysed reaction is NAD(+) + (deoxyribonucleotide)n-3'-hydroxyl + 5'-phospho-(deoxyribonucleotide)m = (deoxyribonucleotide)n+m + AMP + beta-nicotinamide D-nucleotide.. Its function is as follows. DNA ligase that catalyzes the formation of phosphodiester linkages between 5'-phosphoryl and 3'-hydroxyl groups in double-stranded DNA using NAD as a coenzyme and as the energy source for the reaction. It is essential for DNA replication and repair of damaged DNA. This is DNA ligase from Shewanella frigidimarina (strain NCIMB 400).